The following is a 295-amino-acid chain: MLIIDGKKVSLELKDELKASVDRYRETTGKVPGLTVIIVGEDPASQVYVRNKAKTCKEIGMNSSVITMPADTPEEHLLDTIASLNLDPAVHGILVQQPLPEQIDEFAVTLAIDPQKDVDGFHPENLGRLVMGHLDKCFVSCTPYGILELLGRYGIETSGKHCVVVGRSNIVGKPMANLMLQKLKRSNCTVTICHSATQDIASYTRQADILIAAIGRAKFITPDMVKEGAVVIDVGINRIDDPTTKSGTRLVGDVDYEGVSALASAMTPVPGGVGPMTIAMLLKNTLHSFERTHNL.

NADP(+) contacts are provided by residues 166–168, Ser195, and Ile236; that span reads GRS.

This sequence belongs to the tetrahydrofolate dehydrogenase/cyclohydrolase family. In terms of assembly, homodimer.

The catalysed reaction is (6R)-5,10-methylene-5,6,7,8-tetrahydrofolate + NADP(+) = (6R)-5,10-methenyltetrahydrofolate + NADPH. It catalyses the reaction (6R)-5,10-methenyltetrahydrofolate + H2O = (6R)-10-formyltetrahydrofolate + H(+). It participates in one-carbon metabolism; tetrahydrofolate interconversion. In terms of biological role, catalyzes the oxidation of 5,10-methylenetetrahydrofolate to 5,10-methenyltetrahydrofolate and then the hydrolysis of 5,10-methenyltetrahydrofolate to 10-formyltetrahydrofolate. In Chlorobium phaeovibrioides (strain DSM 265 / 1930) (Prosthecochloris vibrioformis (strain DSM 265)), this protein is Bifunctional protein FolD.